The chain runs to 216 residues: Uracil phosphoribosyltransferase (216 aa).

Residues Arg-81, Arg-106, and Asp-135–Ser-143 each bind 5-phospho-alpha-D-ribose 1-diphosphate. Residues Ile-200 and Gly-205–Ala-207 each bind uracil. Asp-206 is a binding site for 5-phospho-alpha-D-ribose 1-diphosphate.

This sequence belongs to the UPRTase family. It depends on Mg(2+) as a cofactor.

It catalyses the reaction UMP + diphosphate = 5-phospho-alpha-D-ribose 1-diphosphate + uracil. It participates in pyrimidine metabolism; UMP biosynthesis via salvage pathway; UMP from uracil: step 1/1. Allosterically activated by GTP. Functionally, catalyzes the conversion of uracil and 5-phospho-alpha-D-ribose 1-diphosphate (PRPP) to UMP and diphosphate. The chain is Uracil phosphoribosyltransferase (upp) from Porphyromonas gingivalis (strain ATCC 33277 / DSM 20709 / CIP 103683 / JCM 12257 / NCTC 11834 / 2561).